The primary structure comprises 99 residues: MPKFALKALWLENDLAIAVDQVVAKNRSPLTHYFFWPRDDAWEQLKAELESKTWISEVDRIELLNRATELINYWQNGGRNRPISEAQAQFPDILIGGNS.

The protein belongs to the chloroplast-specific ribosomal protein cS23 family. Part of the 30S ribosomal subunit.

Its function is as follows. Probably a ribosomal protein or a ribosome-associated protein. This is Probable small ribosomal subunit protein cS23 from Synechococcus sp. (strain JA-2-3B'a(2-13)) (Cyanobacteria bacterium Yellowstone B-Prime).